Reading from the N-terminus, the 194-residue chain is Segregation and condensation protein B (194 aa).

It belongs to the ScpB family. As to quaternary structure, homodimer. Homodimerization may be required to stabilize the binding of ScpA to the Smc head domains. Component of a cohesin-like complex composed of ScpA, ScpB and the Smc homodimer, in which ScpA and ScpB bind to the head domain of Smc. The presence of the three proteins is required for the association of the complex with DNA.

It localises to the cytoplasm. Its function is as follows. Participates in chromosomal partition during cell division. May act via the formation of a condensin-like complex containing Smc and ScpA that pull DNA away from mid-cell into both cell halves. This chain is Segregation and condensation protein B, found in Streptococcus agalactiae serotype Ia (strain ATCC 27591 / A909 / CDC SS700).